The sequence spans 396 residues: Actin-related protein 6 (396 aa).

The residue at position 2 (threonine 2) is an N-acetylthreonine. An N6-acetyllysine modification is found at lysine 260.

Belongs to the actin family. ARP6 subfamily. Component of the chromatin-remodeling SRCAP complex composed of at least SRCAP, DMAP1, RUVBL1, RUVBL2, ACTL6A, YEATS4, ACTR6 and ZNHIT1. Interacts with CBX1, CBX3 and CBX5.

The protein resides in the cytoplasm. The protein localises to the cytoskeleton. Its subcellular location is the nucleus. It localises to the nucleolus. Required for formation and/or maintenance of proper nucleolar structure and function. Plays a dual role in the regulation of ribosomal DNA (rDNA) transcription. In the presence of high glucose, maintains active rDNA transcription through H2A.Z deposition and under glucose starvation, is required for the repression of rDNA transcription, and this function may be independent of H2A.Z. In Homo sapiens (Human), this protein is Actin-related protein 6 (ACTR6).